The chain runs to 230 residues: Lecithin retinol acyltransferase (230 aa).

At 1–194 (MKNPMLEAVS…VKIIIRDQRS (194 aa)) the chain is on the cytoplasmic side. Positions 50–177 (VLEVPRTHLT…CRYGTPISPQ (128 aa)) constitute an LRAT domain. Catalysis depends on residues His-60 and His-72. Cys-161 acts as the Acyl-thioester intermediate in catalysis. A helical membrane pass occupies residues 195–215 (VLASAVLGLASIFCLGLTSYT). The Lumenal portion of the chain corresponds to 216-230 (TLPAIFIPFLLWMAG).

It belongs to the H-rev107 family.

It is found in the endoplasmic reticulum membrane. Its subcellular location is the rough endoplasmic reticulum. It localises to the endosome. The protein resides in the multivesicular body. The protein localises to the cytoplasm. It is found in the perinuclear region. It carries out the reaction all-trans-retinol--[retinol-binding protein] + a 1,2-diacyl-sn-glycero-3-phosphocholine = apo--[retinol-binding protein] + an all-trans-retinyl ester + a 2-acyl-sn-glycero-3-phosphocholine. It catalyses the reaction 1,2-dihexadecanoyl-sn-glycero-3-phosphocholine + all-trans-retinol = all-trans-retinyl hexadecanoate + 2-hexadecanoyl-sn-glycero-3-phosphocholine. The enzyme catalyses 1,2-diheptanoyl-sn-glycero-3-phosphocholine + all-trans-retinol--[retinol-binding protein] = all-trans-retinyl heptanoate + 2-heptanoyl-sn-glycero-3-phosphocholine + apo--[retinol-binding protein]. The catalysed reaction is 1,2-dioctanoyl-sn-glycero-3-phosphocholine + all-trans-retinol--[retinol-binding protein] = 2-octanoyl-sn-glycero-3-phosphocholine + all-trans-retinyl octanoate + apo--[retinol-binding protein]. It carries out the reaction all-trans-retinol--[retinol-binding protein] + 1,2-dihexadecanoyl-sn-glycero-3-phosphocholine = apo--[retinol-binding protein] + all-trans-retinyl hexadecanoate + 2-hexadecanoyl-sn-glycero-3-phosphocholine. It catalyses the reaction 1,2-didodecanoyl-sn-glycero-3-phosphocholine + all-trans-retinol--[retinol-binding protein] = 2-dodecanoyl-sn-glycero-3-phosphocholine + all-trans-retinyl dodecanoate + apo--[retinol-binding protein]. Its pathway is cofactor metabolism; retinol metabolism. With respect to regulation, inhibited by all-trans-retinyl alpha-bromoacetate and N-boc-L-biocytinyl-11-aminoundecane chloro-methyl ketone (BACMK). In terms of biological role, transfers the acyl group from the sn-1 position of phosphatidylcholine to all-trans retinol, producing all-trans retinyl esters. Retinyl esters are storage forms of vitamin A. LRAT plays a critical role in vision. It provides the all-trans retinyl ester substrates for the isomerohydrolase which processes the esters into 11-cis-retinol in the retinal pigment epithelium; due to a membrane-associated alcohol dehydrogenase, 11 cis-retinol is oxidized and converted into 11-cis-retinaldehyde which is the chromophore for rhodopsin and the cone photopigments. Required for the survival of cone photoreceptors and correct rod photoreceptor cell morphology. This Bos taurus (Bovine) protein is Lecithin retinol acyltransferase (LRAT).